The chain runs to 377 residues: Actin depolymerising venom protein gelsolin 1 (377 aa).

Positions 1–26 (MFRQMKLGSLATKLLLACFLVTCTSG) are cleaved as a signal peptide. Gelsolin-like repeat units follow at residues 50–133 (FVPV…SEQF), 174–243 (IRVR…SSTS), and 298–368 (EKPL…PTAF).

As to expression, expressed by the venom gland (posterior main gland) (at protein level).

The protein resides in the secreted. The sequence is that of Actin depolymerising venom protein gelsolin 1 from Platymeris rhadamanthus (Red spot assassin bug).